The primary structure comprises 281 residues: Large ribosomal subunit protein uL2 (281 aa).

2 disordered regions span residues methionine 1–lysine 23 and arginine 224–lysine 281. A compositionally biased stretch (polar residues) spans glycine 12 to lysine 23. Residues lysine 261–lysine 281 are compositionally biased toward basic residues.

This sequence belongs to the universal ribosomal protein uL2 family. As to quaternary structure, part of the 50S ribosomal subunit. Forms a bridge to the 30S subunit in the 70S ribosome.

One of the primary rRNA binding proteins. Required for association of the 30S and 50S subunits to form the 70S ribosome, for tRNA binding and peptide bond formation. It has been suggested to have peptidyltransferase activity; this is somewhat controversial. Makes several contacts with the 16S rRNA in the 70S ribosome. The chain is Large ribosomal subunit protein uL2 from Mycoplasmopsis agalactiae (strain NCTC 10123 / CIP 59.7 / PG2) (Mycoplasma agalactiae).